Consider the following 438-residue polypeptide: Exosome complex component RRP45B (438 aa).

Disordered regions lie at residues 293-322 (PTLA…RAAE) and 334-438 (STEE…KNKS). 2 stretches are compositionally biased toward basic and acidic residues: residues 307-322 (VKEE…RAAE) and 334-347 (STEE…EEAA). The span at 380–394 (TKSSSTKKMNGSGNA) shows a compositional bias: polar residues. Residues 410–429 (LGKKDTKHKDGEMTLKDAVK) show a composition bias toward basic and acidic residues.

This sequence belongs to the RNase PH family.

The protein resides in the cytoplasm. Its subcellular location is the nucleus. In terms of biological role, probable 3'-&gt;5' exoribonuclease involved in the regulation of cuticular wax biosynthesis by controlling the expression of CER3. May act by degrading a specific mRNA species encoding a negative regulator of CER3 transcription. Can perform exosomal functions and complement the yeast rrp45 null mutant. This is Exosome complex component RRP45B from Arabidopsis thaliana (Mouse-ear cress).